The sequence spans 381 residues: S-adenosylmethionine synthase (381 aa).

His-15 is a binding site for ATP. Asp-17 contacts Mg(2+). Glu-43 lines the K(+) pocket. Residues Glu-56 and Gln-99 each coordinate L-methionine. The flexible loop stretch occupies residues 99–109 (QSLDIAQGVDN). ATP is bound by residues 164–166 (DGK), 230–231 (RF), Asp-239, 245–246 (RK), and Lys-266. Asp-239 provides a ligand contact to L-methionine. Lys-270 is a binding site for L-methionine.

This sequence belongs to the AdoMet synthase family. Homotetramer; dimer of dimers. The cofactor is Mg(2+). K(+) serves as cofactor.

Its subcellular location is the cytoplasm. It catalyses the reaction L-methionine + ATP + H2O = S-adenosyl-L-methionine + phosphate + diphosphate. It participates in amino-acid biosynthesis; S-adenosyl-L-methionine biosynthesis; S-adenosyl-L-methionine from L-methionine: step 1/1. Its function is as follows. Catalyzes the formation of S-adenosylmethionine (AdoMet) from methionine and ATP. The overall synthetic reaction is composed of two sequential steps, AdoMet formation and the subsequent tripolyphosphate hydrolysis which occurs prior to release of AdoMet from the enzyme. This is S-adenosylmethionine synthase from Legionella jeonii.